The sequence spans 330 residues: DNA-directed RNA polymerase subunit alpha (330 aa).

Residues 1–231 (MALFNFQKPD…IHHFMLFSDE (231 aa)) form an alpha N-terminal domain (alpha-NTD) region. Residues 253–330 (MRQLLKTKLV…DLAKYKLDKE (78 aa)) form an alpha C-terminal domain (alpha-CTD) region.

Belongs to the RNA polymerase alpha chain family. As to quaternary structure, homodimer. The RNAP catalytic core consists of 2 alpha, 1 beta, 1 beta' and 1 omega subunit. When a sigma factor is associated with the core the holoenzyme is formed, which can initiate transcription.

It carries out the reaction RNA(n) + a ribonucleoside 5'-triphosphate = RNA(n+1) + diphosphate. In terms of biological role, DNA-dependent RNA polymerase catalyzes the transcription of DNA into RNA using the four ribonucleoside triphosphates as substrates. This Flavobacterium psychrophilum (strain ATCC 49511 / DSM 21280 / CIP 103535 / JIP02/86) protein is DNA-directed RNA polymerase subunit alpha.